A 273-amino-acid polypeptide reads, in one-letter code: Putative carboxymethylenebutenolidase (273 aa).

Active-site residues include Cys-130, Asp-191, and His-223.

It belongs to the dienelactone hydrolase family.

It catalyses the reaction 2-(5-oxo-2,5-dihydrofuran-2-ylidene)acetate + H2O = 4-oxohex-2-enedioate + H(+). The chain is Putative carboxymethylenebutenolidase from Saccharomyces cerevisiae (strain ATCC 204508 / S288c) (Baker's yeast).